We begin with the raw amino-acid sequence, 2713 residues long: Histone-lysine N-methyltransferase 2B (2713 aa).

A compositionally biased stretch (gly residues) spans 1–11 (MAAAAGGGSCP). 3 disordered regions span residues 1–65 (MAAA…GEDT), 82–524 (RLWA…PTVV), and 542–783 (VSAR…ARVA). N-acetylalanine is present on alanine 2. Low complexity predominate over residues 12 to 24 (GPGSARGRFPGRP). A Menin-binding motif (MBM) motif is present at residues 17–36 (RGRFPGRPRGSGGGGGRGGR). 2 stretches are compositionally biased toward gly residues: residues 25-38 (RGSGGGGGRGGRGN) and 49-60 (RGGGAAGPGGAE). A DNA-binding region (a.T hook 1) is located at residues 37–44 (GNGAERVR). Residues 109–123 (PEEESSDGESEEEEF) show a composition bias toward acidic residues. A DNA-binding region (a.T hook 2) is located at residues 110–117 (EEESSDGE). Phosphoserine is present on residues serine 113, serine 114, and serine 118. Positions 144–158 (QRGRAPRGRGRKHKT) are enriched in basic residues. Basic and acidic residues predominate over residues 340 to 360 (PQRKDGDEPERGSCRKKQEQK). The segment at residues 357–365 (QEQKLEEEE) is a DNA-binding region (a.T hook 3). Over residues 361-393 (LEEEEEEEEKEGEEKEEKDDNEDNNKQEEEEET) the composition is skewed to acidic residues. Residues 394-412 (ERAVAEEEAMLAKEKEEAK) show a composition bias toward basic and acidic residues. Residues 414–460 (PSPPLTPPVPSPPPPLPPPSTSPPPPASPLPPPVSPPPPLSPPPYPA) are compositionally biased toward pro residues. Over residues 501–517 (GTLSPTPNPSTTTGSPL) the composition is skewed to low complexity. Over residues 555–566 (RFMDEDPPKPPK) the composition is skewed to basic and acidic residues. Pro residues predominate over residues 577 to 605 (ATSPPAPQEPVPVSSPPRVPTPPSTPVPL). Basic and acidic residues predominate over residues 606 to 617 (PEKRRSILREPT). The span at 627 to 645 (LPPPPPAPPPAPSPPPAPA) shows a compositional bias: pro residues. Composition is skewed to low complexity over residues 646–657 (TPSRRPLLLRAP), 715–728 (VPVVTSPVKVEVPP), and 738–756 (QQLQLQQPPQALQTQLLPQ). Over residues 757 to 774 (ALPPQQPQAQPPPSPQHT) the composition is skewed to pro residues. Lysine 810 is covalently cross-linked (Glycyl lysine isopeptide (Lys-Gly) (interchain with G-Cter in SUMO2)). Phosphoserine occurs at positions 826, 849, and 866. Disordered regions lie at residues 831–872 (TEEA…QGPR) and 899–964 (SALP…HHGK). Over residues 841 to 862 (TPDRGCVRSEDESMEAKRDRAS) the composition is skewed to basic and acidic residues. The span at 912-922 (EDTSSASETES) shows a compositional bias: low complexity. The residue at position 941 (serine 941) is a Phosphoserine. The span at 953 to 964 (TPRRSLPSHHGK) shows a compositional bias: basic residues. The CXXC-type zinc-finger motif lies at 964-1011 (KKMRMARCGHCRGCLRVQDCGSCVNCLDKPKFGGPNTKKQCCVYRKCD). Positions 971, 974, 977, 983, 986, 989, 1005, and 1010 each coordinate Zn(2+). 2 disordered regions span residues 1032 to 1076 (LLPW…DSLL) and 1088 to 1138 (QRPS…LQPV). 4 positions are modified to phosphoserine: serine 1037, serine 1040, serine 1098, and serine 1101. Residue lysine 1142 forms a Glycyl lysine isopeptide (Lys-Gly) (interchain with G-Cter in SUMO2) linkage. PHD-type zinc fingers lie at residues 1207 to 1258 (PMVC…CKFC), 1255 to 1309 (CKFC…CVRC), and 1341 to 1402 (GNYC…CAGA). A Bromo domain is found at 1410–1510 (ALSGALQGGL…GLLLKLLESA (101 aa)). The tract at residues 1550-1572 (RQQESETPESGQPPGDPSAAFQS) is disordered. A C2HC pre-PHD-type zinc finger spans residues 1584–1624 (PRQCALCLKYGDADSKEAGRLLYIGQNEWTHVNCAIWSAEV). A PHD-type 4 zinc finger spans residues 1645–1692 (MRCELCLKPGATVGCCLSSCLSNFHFMCARASYCIFQDDKKVFCQKHT). Positions 1733 to 1789 (VINVLIGSIRINSLGTLSDLSDCEGRLFPIGYQCSRLYWSTVDARRRCWYRCRILEY) constitute an FYR N-terminal domain. A compositionally biased stretch (polar residues) spans 1808–1821 (QTIVHSPTPSSDTD). Disordered stretches follow at residues 1808 to 1973 (QTIV…GPDF), 2056 to 2104 (QLDG…PPED), 2116 to 2160 (NLGG…RTFA), 2279 to 2356 (VSTF…RCPL), and 2382 to 2408 (YSAGEASSSEEEPPSPEDKENQVPKRV). Composition is skewed to low complexity over residues 1872–1890 (PLGGVSFGPLPSPGSPSSL) and 1923–1933 (RRTSSPLRTSP). Serine 1926 and serine 1932 each carry phosphoserine. Positions 1939–1950 (LSTSVTALTPTS) are enriched in polar residues. Residues 2058–2068 (DGVDDGTDSEA) show a composition bias toward acidic residues. Phosphothreonine occurs at positions 2064 and 2079. Gly residues predominate over residues 2084 to 2093 (PGVGRGGVLG). Residues 2140-2153 (NGSQPPQSLSTSPA) are compositionally biased toward polar residues. 2 positions are modified to phosphoserine: serine 2286 and serine 2346. The FYR C-terminal domain maps to 2409-2490 (GPHLRFEISS…QRCQHYKFRY (82 aa)). A WDR5 interaction motif (WIN) motif is present at residues 2506–2511 (GAARAE). Residues 2573 to 2689 (EAVGVYRSAI…RGEELTYDYK (117 aa)) form the SET domain. Residues histidine 2583, arginine 2585, tyrosine 2627, and 2650 to 2651 (NH) each bind S-adenosyl-L-methionine. Residues cysteine 2653 and cysteine 2701 each contribute to the Zn(2+) site. A Post-SET domain is found at 2697 to 2713 (NKLPCNCGAKRCRRFLN). Asparagine 2702 serves as a coordination point for S-adenosyl-L-methionine. Positions 2703 and 2708 each coordinate Zn(2+).

Belongs to the class V-like SAM-binding methyltransferase superfamily. Histone-lysine methyltransferase family. TRX/MLL subfamily. As to quaternary structure, component of the menin-associated histone methyltransferase complex, at least composed of KMT2B/MLL4, ASH2L, RBBP5, WDR5, DPY30, MEN1; the complex interacts with POLR2A and POLR2B via MEN1. Interacts with NFE2. Interacts with KDM6B. Interacts (via WIN motif) with WDR5. Interacts (via MBM motif) with MEN1.

It is found in the nucleus. It carries out the reaction L-lysyl(4)-[histone H3] + S-adenosyl-L-methionine = N(6)-methyl-L-lysyl(4)-[histone H3] + S-adenosyl-L-homocysteine + H(+). It catalyses the reaction N(6)-methyl-L-lysyl(4)-[histone H3] + S-adenosyl-L-methionine = N(6),N(6)-dimethyl-L-lysyl(4)-[histone H3] + S-adenosyl-L-homocysteine + H(+). Its function is as follows. Histone methyltransferase that catalyzes methyl group transfer from S-adenosyl-L-methionine to the epsilon-amino group of 'Lys-4' of histone H3 (H3K4) via a non-processive mechanism. Part of chromatin remodeling machinery predominantly forms H3K4me1 and H3K4me2 methylation marks at active chromatin sites where transcription and DNA repair take place. Likely plays a redundant role with KMT2C in enriching H3K4me1 marks on primed and active enhancer elements. Plays a central role in beta-globin locus transcription regulation by being recruited by NFE2. Plays an important role in controlling bulk H3K4me during oocyte growth and preimplantation development. Required during the transcriptionally active period of oocyte growth for the establishment and/or maintenance of bulk H3K4 trimethylation (H3K4me3), global transcriptional silencing that preceeds resumption of meiosis, oocyte survival and normal zygotic genome activation. The sequence is that of Histone-lysine N-methyltransferase 2B (Kmt2b) from Mus musculus (Mouse).